A 712-amino-acid chain; its full sequence is Protein TAPT1 homolog (712 aa).

A compositionally biased stretch (low complexity) spans 1–21; the sequence is MNNVPSTSRENSRNPSESSSS. 2 disordered regions span residues 1-22 and 44-66; these read MNNV…SSSI and ITMS…EIET. 7 helical membrane passes run 196-216, 222-242, 305-325, 379-399, 402-422, 470-490, and 497-517; these read FFYL…GALL, TSAE…SMLI, TCGH…LVIL, HIFA…NWNI, FTEM…VDWL, GFIP…TFTL, and IIFG…GVVM. Residues 596 to 619 show a composition bias toward basic and acidic residues; that stretch reads EIRRSTDRETAVSHLTARSDERTP. The segment at 596 to 712 is disordered; the sequence is EIRRSTDRET…MPEQGVQRIE (117 aa). A compositionally biased stretch (polar residues) spans 656-667; sequence TENNTNSNSEQA. Residues 675-692 show a composition bias toward low complexity; the sequence is TAAPVTSSASTNTNATSS.

Belongs to the TAPT1 family.

Its subcellular location is the membrane. The polypeptide is Protein TAPT1 homolog (Caenorhabditis elegans).